Consider the following 294-residue polypeptide: Phosphoribosylaminoimidazole-succinocarboxamide synthase (294 aa).

The protein belongs to the SAICAR synthetase family.

The catalysed reaction is 5-amino-1-(5-phospho-D-ribosyl)imidazole-4-carboxylate + L-aspartate + ATP = (2S)-2-[5-amino-1-(5-phospho-beta-D-ribosyl)imidazole-4-carboxamido]succinate + ADP + phosphate + 2 H(+). Its pathway is purine metabolism; IMP biosynthesis via de novo pathway; 5-amino-1-(5-phospho-D-ribosyl)imidazole-4-carboxamide from 5-amino-1-(5-phospho-D-ribosyl)imidazole-4-carboxylate: step 1/2. In Thermoplasma volcanium (strain ATCC 51530 / DSM 4299 / JCM 9571 / NBRC 15438 / GSS1), this protein is Phosphoribosylaminoimidazole-succinocarboxamide synthase.